The following is a 367-amino-acid chain: Glycolate oxidase 3 (367 aa).

The region spanning 1-360 is the FMN hydroxy acid dehydrogenase domain; sequence MELITNVSEY…TRNHVITDSD (360 aa). Tyrosine 25 provides a ligand contact to glyoxylate. FMN is bound by residues 78-80, serine 107, 128-130, and threonine 156; these read PSA and QLY. Residue tyrosine 130 participates in glyoxylate binding. Arginine 165 contributes to the glyoxylate binding site. FMN is bound by residues lysine 231 and serine 253. 2 residues coordinate glyoxylate: histidine 255 and arginine 258. Catalysis depends on histidine 255, which acts as the Proton acceptor. FMN contacts are provided by residues 286-290 and 309-310; these read DGGVR and GR. The Microbody targeting signal motif lies at 365–367; that stretch reads SRL.

Belongs to the FMN-dependent alpha-hydroxy acid dehydrogenase family. As to quaternary structure, homotetramer. FMN is required as a cofactor.

It localises to the peroxisome. The catalysed reaction is glycolate + O2 = glyoxylate + H2O2. It participates in photosynthesis; photorespiration; glycine from 2-phosphoglycolate: step 2/3. Its function is as follows. Catalyzes the oxidation of glycolate to glyoxylate, with a reduction of O2 to H2O2. Is a key enzyme in photorespiration in green plants. In Oryza sativa subsp. indica (Rice), this protein is Glycolate oxidase 3 (GLO3).